Consider the following 143-residue polypeptide: ATP synthase subunit b' (143 aa).

The helical transmembrane segment at 6–26 (ATLPLMALQFVVLAFLLNAIF) threads the bilayer.

It belongs to the ATPase B chain family. As to quaternary structure, F-type ATPases have 2 components, F(1) - the catalytic core - and F(0) - the membrane proton channel. F(1) has five subunits: alpha(3), beta(3), gamma(1), delta(1), epsilon(1). F(0) has four main subunits: a(1), b(1), b'(1) and c(10-14). The alpha and beta chains form an alternating ring which encloses part of the gamma chain. F(1) is attached to F(0) by a central stalk formed by the gamma and epsilon chains, while a peripheral stalk is formed by the delta, b and b' chains.

The protein resides in the cellular thylakoid membrane. F(1)F(0) ATP synthase produces ATP from ADP in the presence of a proton or sodium gradient. F-type ATPases consist of two structural domains, F(1) containing the extramembraneous catalytic core and F(0) containing the membrane proton channel, linked together by a central stalk and a peripheral stalk. During catalysis, ATP synthesis in the catalytic domain of F(1) is coupled via a rotary mechanism of the central stalk subunits to proton translocation. In terms of biological role, component of the F(0) channel, it forms part of the peripheral stalk, linking F(1) to F(0). The b'-subunit is a diverged and duplicated form of b found in plants and photosynthetic bacteria. This chain is ATP synthase subunit b', found in Synechocystis sp. (strain ATCC 27184 / PCC 6803 / Kazusa).